The sequence spans 429 residues: Protein arginine N-methyltransferase 2 (429 aa).

2 disordered regions span residues 41–76 (PEVA…EDHE) and 137–180 (ALDS…EETP). A compositionally biased stretch (acidic residues) spans 137–163 (ALDSDDEDDEEMAEGEEAQAEDGEEAP). Residues 164–174 (ELVAAEEATQT) show a composition bias toward low complexity. Positions 190–429 (LEEQVTSDKY…YRLPVCTFLG (240 aa)) constitute an RMT2 domain. S-adenosyl-L-methionine contacts are provided by residues tyrosine 199, methionine 228, 250–255 (FGMGII), 271–273 (EAH), 308–309 (WQ), and aspartate 328.

The protein belongs to the class I-like SAM-binding methyltransferase superfamily. RMT2 methyltransferase family. In terms of assembly, monomer.

The protein localises to the cytoplasm. Its subcellular location is the nucleus. Functionally, S-adenosyl-L-methionine-dependent protein-arginine N-methyltransferase that methylates the delta-nitrogen atom of arginine residues to form N5-methylarginine (type IV) in target proteins. Monomethylates ribosomal protein L12. This chain is Protein arginine N-methyltransferase 2, found in Neurospora crassa (strain ATCC 24698 / 74-OR23-1A / CBS 708.71 / DSM 1257 / FGSC 987).